The primary structure comprises 848 residues: Adenylate cyclase (848 aa).

The tract at residues 1 to 535 (MYLYIETLKQ…DVSHHFPLRL (535 aa)) is catalytic. The regulatory stretch occupies residues 541–848 (KALYSPCEIR…DAPLLQQYFS (308 aa)). A Phosphohistidine; by CRR modification is found at His609.

The protein belongs to the adenylyl cyclase class-1 family.

Its subcellular location is the cytoplasm. It carries out the reaction ATP = 3',5'-cyclic AMP + diphosphate. This chain is Adenylate cyclase (cyaA), found in Escherichia coli O6:H1 (strain CFT073 / ATCC 700928 / UPEC).